A 149-amino-acid chain; its full sequence is UPF0178 protein VV1_1847 (149 aa).

Belongs to the UPF0178 family.

The sequence is that of UPF0178 protein VV1_1847 from Vibrio vulnificus (strain CMCP6).